The sequence spans 473 residues: Glycine--tRNA ligase (473 aa).

Arg-101 and Glu-172 together coordinate substrate. ATP is bound by residues 204–206 (RNE), 214–219 (FRTREF), 289–290 (EL), and 333–336 (GVER). 219–223 (FEQME) serves as a coordination point for substrate. 329 to 333 (EPSVG) contributes to the substrate binding site.

Belongs to the class-II aminoacyl-tRNA synthetase family. Homodimer.

It localises to the cytoplasm. It carries out the reaction tRNA(Gly) + glycine + ATP = glycyl-tRNA(Gly) + AMP + diphosphate. Functionally, catalyzes the attachment of glycine to tRNA(Gly). This chain is Glycine--tRNA ligase, found in Ureaplasma urealyticum serovar 10 (strain ATCC 33699 / Western).